A 327-amino-acid polypeptide reads, in one-letter code: MPRGQKSKLRAREKRRQARAKNAQEKEASPGPFYGCPHQASPVASMPTSPNMPMGEQSTFSHSYTSTSDQNLDEKSSDDSEDTEDWCKDPINHKVVLLVQFLMEKYQKKEVITKADMLKYVIKTSKNHFNEILKRASEHMELAFGIDLKEVDPNRHCYALFNKLEHTFDGVMGEEKMPSSGLLMIVLGVIFMNDNCVSETEIWNVLSMMGVYANRKHFIYGDPKKVITEDMVQLKYLEYQQVPNSNPPSFEFTWGPRACAEISKMKILEFWAKIHDTTPDSFPTLYEAALKDEEERAQARAVARAHTAAMASPYSRATVCSSSHTNI.

Positions 1 to 19 (MPRGQKSKLRAREKRRQAR) are enriched in basic residues. The tract at residues 1-85 (MPRGQKSKLR…SSDDSEDTED (85 aa)) is disordered. Residues 46-70 (MPTSPNMPMGEQSTFSHSYTSTSDQ) show a composition bias toward polar residues. Residues 91 to 289 (INHKVVLLVQ…DSFPTLYEAA (199 aa)) enclose the MAGE domain.

Interacts with LNX1. Expressed in testis, stomach, large intestine, small intestine, spleen, lymph node, bone marrow lymphocytes and blood T-lymphocytes. Not detected in brain, heart, lung, liver or kidney (at protein level).

The protein localises to the cytoplasm. May enhance ubiquitin ligase activity of RING-type zinc finger-containing E3 ubiquitin-protein ligases. Proposed to act through recruitment and/or stabilization of the Ubl-conjugating enzyme (E2) at the E3:substrate complex. This Mus musculus (Mouse) protein is Melanoma-associated antigen B18.